Reading from the N-terminus, the 475-residue chain is Ribulose bisphosphate carboxylase large chain (475 aa).

A propeptide spanning residues 1–2 (MS) is cleaved from the precursor. N-acetylproline is present on Pro3. At Lys14 the chain carries N6,N6,N6-trimethyllysine. The substrate site is built by Asn123 and Thr173. The active-site Proton acceptor is the Lys175. Residue Lys177 coordinates substrate. Positions 201, 203, and 204 each coordinate Mg(2+). At Lys201 the chain carries N6-carboxylysine. His294 functions as the Proton acceptor in the catalytic mechanism. The substrate site is built by Arg295, His327, and Ser379.

Belongs to the RuBisCO large chain family. Type I subfamily. As to quaternary structure, heterohexadecamer of 8 large chains and 8 small chains; disulfide-linked. The disulfide link is formed within the large subunit homodimers. It depends on Mg(2+) as a cofactor. In terms of processing, the disulfide bond which can form in the large chain dimeric partners within the hexadecamer appears to be associated with oxidative stress and protein turnover.

It localises to the plastid. The protein resides in the chloroplast. It catalyses the reaction 2 (2R)-3-phosphoglycerate + 2 H(+) = D-ribulose 1,5-bisphosphate + CO2 + H2O. It carries out the reaction D-ribulose 1,5-bisphosphate + O2 = 2-phosphoglycolate + (2R)-3-phosphoglycerate + 2 H(+). RuBisCO catalyzes two reactions: the carboxylation of D-ribulose 1,5-bisphosphate, the primary event in carbon dioxide fixation, as well as the oxidative fragmentation of the pentose substrate in the photorespiration process. Both reactions occur simultaneously and in competition at the same active site. This Angiopteris lygodiifolia (Turnip fern) protein is Ribulose bisphosphate carboxylase large chain.